The following is a 910-amino-acid chain: Leucine--tRNA ligase (910 aa).

A 'HIGH' region motif is present at residues P42–H52. A 'KMSKS' region motif is present at residues T658–S662. K661 provides a ligand contact to ATP.

Belongs to the class-I aminoacyl-tRNA synthetase family.

Its subcellular location is the cytoplasm. The catalysed reaction is tRNA(Leu) + L-leucine + ATP = L-leucyl-tRNA(Leu) + AMP + diphosphate. The sequence is that of Leucine--tRNA ligase from Acidovorax sp. (strain JS42).